A 355-amino-acid polypeptide reads, in one-letter code: UDP-N-acetylglucosamine--N-acetylmuramyl-(pentapeptide) pyrophosphoryl-undecaprenol N-acetylglucosamine transferase (355 aa).

UDP-N-acetyl-alpha-D-glucosamine is bound by residues 13 to 15 (TGG), N125, R162, S190, I244, and Q289.

It belongs to the glycosyltransferase 28 family. MurG subfamily.

It localises to the cell inner membrane. It carries out the reaction di-trans,octa-cis-undecaprenyl diphospho-N-acetyl-alpha-D-muramoyl-L-alanyl-D-glutamyl-meso-2,6-diaminopimeloyl-D-alanyl-D-alanine + UDP-N-acetyl-alpha-D-glucosamine = di-trans,octa-cis-undecaprenyl diphospho-[N-acetyl-alpha-D-glucosaminyl-(1-&gt;4)]-N-acetyl-alpha-D-muramoyl-L-alanyl-D-glutamyl-meso-2,6-diaminopimeloyl-D-alanyl-D-alanine + UDP + H(+). Its pathway is cell wall biogenesis; peptidoglycan biosynthesis. Its function is as follows. Cell wall formation. Catalyzes the transfer of a GlcNAc subunit on undecaprenyl-pyrophosphoryl-MurNAc-pentapeptide (lipid intermediate I) to form undecaprenyl-pyrophosphoryl-MurNAc-(pentapeptide)GlcNAc (lipid intermediate II). The chain is UDP-N-acetylglucosamine--N-acetylmuramyl-(pentapeptide) pyrophosphoryl-undecaprenol N-acetylglucosamine transferase from Neisseria meningitidis serogroup C (strain 053442).